Consider the following 187-residue polypeptide: MFKVKILLIGPSECGKTALANFLSDTTESIGADYSPTQGVRILEFESHNLHNGNKSSSCDVELWDCAGDFKFESCWPALMKDSNGVAVVFNPDVPSHLKEIETWYSAFISSQGLLEGQCLLIAHHKPGSGADTNRPSLAPQLNKLPLIHSNLEEEPEEVRQEFNKYLGKVMRMLSESQEREEMSIIT.

GTP is bound by residues 10–17 (GPSECGKT), 65–69 (DCAGD), and 125–128 (HKPG).

Belongs to the small GTPase superfamily. Rab family.

The sequence is that of Intraflagellar transport protein 22 homolog (ift22) from Danio rerio (Zebrafish).